Consider the following 562-residue polypeptide: Potassium-transporting ATPase potassium-binding subunit (562 aa).

Transmembrane regions (helical) follow at residues 6 to 26 (FLLI…LGGF), 63 to 83 (ALAI…LLMA), 132 to 152 (GLTV…FALI), 175 to 195 (LYVL…QGVL), 253 to 273 (FVQM…FGQV), 283 to 303 (LIWA…YAEL), 327 to 347 (FGIL…CGAV), 356 to 376 (ALGG…FGGV), 379 to 399 (GLYG…LMIG), 416 to 436 (MTAL…ALAL), 483 to 503 (LLLA…VLAI), and 526 to 546 (LFIG…FIPA).

This sequence belongs to the KdpA family. As to quaternary structure, the system is composed of three essential subunits: KdpA, KdpB and KdpC.

Its subcellular location is the cell inner membrane. Functionally, part of the high-affinity ATP-driven potassium transport (or Kdp) system, which catalyzes the hydrolysis of ATP coupled with the electrogenic transport of potassium into the cytoplasm. This subunit binds the periplasmic potassium ions and delivers the ions to the membrane domain of KdpB through an intramembrane tunnel. This Yersinia pseudotuberculosis serotype O:1b (strain IP 31758) protein is Potassium-transporting ATPase potassium-binding subunit.